A 171-amino-acid polypeptide reads, in one-letter code: Ribosome-binding factor A (171 aa).

Over residues 126 to 138 the composition is skewed to basic and acidic residues; the sequence is VREGAKHAGDADP. Residues 126–171 form a disordered region; the sequence is VREGAKHAGDADPYRVSGVEEEAGGSGEVQAEFDAEDTGDRNRQDD.

It belongs to the RbfA family. Monomer. Binds 30S ribosomal subunits, but not 50S ribosomal subunits or 70S ribosomes.

Its subcellular location is the cytoplasm. One of several proteins that assist in the late maturation steps of the functional core of the 30S ribosomal subunit. Associates with free 30S ribosomal subunits (but not with 30S subunits that are part of 70S ribosomes or polysomes). Required for efficient processing of 16S rRNA. May interact with the 5'-terminal helix region of 16S rRNA. This is Ribosome-binding factor A from Mycobacterium sp. (strain JLS).